The following is a 285-amino-acid chain: CBY1-interacting BAR domain-containing protein 1-B (285 aa).

Residues 1-48 (MSQTPEARTRDNQTRQIQESVNNVEKHFGELCQIFAGYVRKTARLRDK) constitute a mitochondrion transit peptide. The BAR-like stretch occupies residues 11–221 (DNQTRQIQES…DIDEEEDLEV (211 aa)). The stretch at 142 to 184 (RQIISQAETELQRATMDAARISQQLEETIDNFEKQKIKDIKKL) forms a coiled coil. Residues 241 to 261 (NSRSGSTSRAPSVISQPPGNR) are compositionally biased toward polar residues. The disordered stretch occupies residues 241–285 (NSRSGSTSRAPSVISQPPGNRQKNRMEDDEDGEDDNDENSTEDEN). Acidic residues predominate over residues 267 to 285 (EDDEDGEDDNDENSTEDEN).

Belongs to the CIBAR family.

The protein resides in the cytoplasm. Its subcellular location is the cytoskeleton. The protein localises to the microtubule organizing center. It is found in the centrosome. It localises to the centriole. The protein resides in the cell projection. Its subcellular location is the cilium. The protein localises to the nucleus. It is found in the mitochondrion inner membrane. It localises to the flagellum. Its function is as follows. Plays a critical role in regulating mitochondrial ultrastructure and function by maintaining the integrity of mitochondrial morphology, particularly the organization of cristae. Plays a crucial role in ciliogenesis. Plays a key role in the correct positioning of the annulus, a septin-based ring structure in the sperm flagellum, serving both as a physical barrier and a membrane diffusion barrier that separates the midpiece (MP) from the principal piece (PP). The chain is CBY1-interacting BAR domain-containing protein 1-B from Xenopus laevis (African clawed frog).